The chain runs to 354 residues: Biotin synthase (354 aa).

In terms of domain architecture, Radical SAM core spans 41–265; the sequence is NEVQISRLLS…IMPHSRVRLS (225 aa). Cys-56, Cys-60, and Cys-63 together coordinate [4Fe-4S] cluster. Residues Cys-100, Cys-131, Cys-191, and Arg-263 each coordinate [2Fe-2S] cluster.

Belongs to the radical SAM superfamily. Biotin synthase family. Homodimer. The cofactor is [4Fe-4S] cluster. [2Fe-2S] cluster serves as cofactor.

The catalysed reaction is (4R,5S)-dethiobiotin + (sulfur carrier)-SH + 2 reduced [2Fe-2S]-[ferredoxin] + 2 S-adenosyl-L-methionine = (sulfur carrier)-H + biotin + 2 5'-deoxyadenosine + 2 L-methionine + 2 oxidized [2Fe-2S]-[ferredoxin]. It participates in cofactor biosynthesis; biotin biosynthesis; biotin from 7,8-diaminononanoate: step 2/2. Functionally, catalyzes the conversion of dethiobiotin (DTB) to biotin by the insertion of a sulfur atom into dethiobiotin via a radical-based mechanism. The chain is Biotin synthase from Shewanella sediminis (strain HAW-EB3).